Reading from the N-terminus, the 941-residue chain is Peroxisomal ATPase PEX6 (941 aa).

ATP contacts are provided by residues 384–391 (GIPGCGKR) and 698–705 (GPPGTGKT).

The protein belongs to the AAA ATPase family. As to quaternary structure, interacts with PEX1; forming the PEX1-PEX6 AAA ATPase complex, which is composed of a heterohexamer formed by a trimer of PEX1-PEX6 dimers. Interacts with APME9.

Its subcellular location is the cytoplasm. It is found in the cytosol. The protein resides in the peroxisome membrane. It catalyses the reaction ATP + H2O = ADP + phosphate + H(+). Functionally, component of the PEX1-PEX6 AAA ATPase complex, a protein dislocase complex that mediates the ATP-dependent extraction of the PEX5 receptor from peroxisomal membranes, an essential step for PEX5 recycling. Specifically recognizes PEX5 monoubiquitinated at 'Cys-11', and pulls it out of the peroxisome lumen through the PEX2-PEX10-PEX12 retrotranslocation channel. Extraction by the PEX1-PEX6 AAA ATPase complex is accompanied by unfolding of the TPR repeats and release of bound cargo from PEX5. Required for jasmonate biosynthesis. Necessary for the developmental elimination of obsolete peroxisome matix proteins. The sequence is that of Peroxisomal ATPase PEX6 from Arabidopsis thaliana (Mouse-ear cress).